A 69-amino-acid polypeptide reads, in one-letter code: Trypsin/subtilisin inhibitor (69 aa).

The cysteines at positions 4 and 49 are disulfide-linked.

It belongs to the protease inhibitor I13 (potato type I serine protease inhibitor) family.

Functionally, inhibitor of trypsin, chymotrypsin, subtilisin, etc. In Amaranthus caudatus (Love-lies-bleeding), this protein is Trypsin/subtilisin inhibitor.